A 181-amino-acid chain; its full sequence is Small ribosomal subunit protein uS4 (181 aa).

Residues 104–166 (RRLQTIVYKK…VTSSFKSRPP (63 aa)) form the S4 RNA-binding domain.

Belongs to the universal ribosomal protein uS4 family. In terms of assembly, part of the 30S ribosomal subunit. Contacts protein S5. The interaction surface between S4 and S5 is involved in control of translational fidelity.

One of the primary rRNA binding proteins, it binds directly to 16S rRNA where it nucleates assembly of the body of the 30S subunit. Functionally, with S5 and S12 plays an important role in translational accuracy. This Saccharolobus islandicus (strain Y.N.15.51 / Yellowstone #2) (Sulfolobus islandicus) protein is Small ribosomal subunit protein uS4.